The sequence spans 429 residues: MFS-type efflux pump MSMEG_3705 (429 aa).

Helical transmembrane passes span 21 to 41, 59 to 79, 86 to 106, 115 to 137, 150 to 170, 181 to 201, 228 to 248, 264 to 284, 299 to 319, 327 to 347, 361 to 381, and 397 to 417; these read AWAAVGVLALVGTLNYVDRFL, AIGVINGFGFLIVYAVMGIAV, GAFGAVVAGCLTLWGTMTMLG, LALTRVGVAIGEAGSTPAAHAYV, LAVITIAIPLASTASLLGGGL, FVIMGAVSVVLAPLVLLVVGV, FLIVVAGTAFISAAGYSLTTF, VGVEYGLATGAIGVLGLLIVG, LWIVVTLTLVLLPASVLAFVV, LFLALSYAIGTSYLAPSIAAI, AMFLFFNAVFGSVGPFVVGML, and ALLLLVAAMQLVGAICYWLAS.

This sequence belongs to the major facilitator superfamily.

The protein resides in the cell inner membrane. Probably plays a role in bacterial growth and resistance to antibiotics. The polypeptide is MFS-type efflux pump MSMEG_3705 (Mycolicibacterium smegmatis (strain ATCC 700084 / mc(2)155) (Mycobacterium smegmatis)).